The following is a 339-amino-acid chain: Glycerol-3-phosphate dehydrogenase [NAD(P)+] (339 aa).

Residues serine 15, tyrosine 16, histidine 36, and lysine 110 each coordinate NADPH. 3 residues coordinate sn-glycerol 3-phosphate: lysine 110, glycine 139, and threonine 141. Residue alanine 143 participates in NADPH binding. Positions 195, 248, 258, 259, and 260 each coordinate sn-glycerol 3-phosphate. Lysine 195 acts as the Proton acceptor in catalysis. Arginine 259 is a binding site for NADPH. 2 residues coordinate NADPH: valine 283 and glutamate 285.

Belongs to the NAD-dependent glycerol-3-phosphate dehydrogenase family.

It localises to the cytoplasm. It catalyses the reaction sn-glycerol 3-phosphate + NAD(+) = dihydroxyacetone phosphate + NADH + H(+). The enzyme catalyses sn-glycerol 3-phosphate + NADP(+) = dihydroxyacetone phosphate + NADPH + H(+). Its pathway is membrane lipid metabolism; glycerophospholipid metabolism. Catalyzes the reduction of the glycolytic intermediate dihydroxyacetone phosphate (DHAP) to sn-glycerol 3-phosphate (G3P), the key precursor for phospholipid synthesis. This chain is Glycerol-3-phosphate dehydrogenase [NAD(P)+], found in Erwinia tasmaniensis (strain DSM 17950 / CFBP 7177 / CIP 109463 / NCPPB 4357 / Et1/99).